Here is a 221-residue protein sequence, read N- to C-terminus: uncharacterized protein (221 aa).

This is an uncharacterized protein from Acanthamoeba polyphaga (Amoeba).